Consider the following 146-residue polypeptide: Ribonuclease P protein component (146 aa).

The protein belongs to the RnpA family. As to quaternary structure, consists of a catalytic RNA component (M1 or rnpB) and a protein subunit.

The enzyme catalyses Endonucleolytic cleavage of RNA, removing 5'-extranucleotides from tRNA precursor.. RNaseP catalyzes the removal of the 5'-leader sequence from pre-tRNA to produce the mature 5'-terminus. It can also cleave other RNA substrates such as 4.5S RNA. The protein component plays an auxiliary but essential role in vivo by binding to the 5'-leader sequence and broadening the substrate specificity of the ribozyme. The chain is Ribonuclease P protein component from Helicobacter hepaticus (strain ATCC 51449 / 3B1).